The sequence spans 105 residues: Phosphoribosyl-ATP pyrophosphatase (105 aa).

Belongs to the PRA-PH family.

It is found in the cytoplasm. The enzyme catalyses 1-(5-phospho-beta-D-ribosyl)-ATP + H2O = 1-(5-phospho-beta-D-ribosyl)-5'-AMP + diphosphate + H(+). Its pathway is amino-acid biosynthesis; L-histidine biosynthesis; L-histidine from 5-phospho-alpha-D-ribose 1-diphosphate: step 2/9. In Ruegeria pomeroyi (strain ATCC 700808 / DSM 15171 / DSS-3) (Silicibacter pomeroyi), this protein is Phosphoribosyl-ATP pyrophosphatase.